Consider the following 526-residue polypeptide: Cytochrome P450 4e2 (526 aa).

Heme-binding residues include Glu-307 and Cys-444.

It belongs to the cytochrome P450 family. The cofactor is heme.

The protein localises to the endoplasmic reticulum membrane. Its subcellular location is the microsome membrane. May be involved in the metabolism of insect hormones and in the breakdown of synthetic insecticides. The protein is Cytochrome P450 4e2 (Cyp4e2) of Drosophila melanogaster (Fruit fly).